The chain runs to 294 residues: N-acetylmuramic acid 6-phosphate etherase (294 aa).

Residues 54–217 form the SIS domain; that stretch reads VIKSFEEEGR…STASMIGVGK (164 aa). Glu-82 acts as the Proton donor in catalysis. Residue Glu-113 is part of the active site.

It belongs to the GCKR-like family. MurNAc-6-P etherase subfamily. As to quaternary structure, homodimer.

The catalysed reaction is N-acetyl-D-muramate 6-phosphate + H2O = N-acetyl-D-glucosamine 6-phosphate + (R)-lactate. It participates in amino-sugar metabolism; N-acetylmuramate degradation. Functionally, specifically catalyzes the cleavage of the D-lactyl ether substituent of MurNAc 6-phosphate, producing GlcNAc 6-phosphate and D-lactate. This Bacillus cereus (strain AH187) protein is N-acetylmuramic acid 6-phosphate etherase.